The sequence spans 427 residues: UDP-N-acetyl-D-mannosamine dehydrogenase (427 aa).

NAD(+)-binding residues include Tyr-19, Ile-20, Asp-39, Arg-44, Thr-91, and Thr-130. Positions 155, 156, 207, 211, 214, 245, 247, and 258 each coordinate UDP-N-acetyl-alpha-D-mannosaminouronate. Residue Lys-207 is the Proton donor/acceptor of the active site. Residue Cys-261 is the Nucleophile of the active site. UDP-N-acetyl-alpha-D-mannosaminouronate-binding residues include Tyr-318 and Lys-319. Arg-326 provides a ligand contact to NAD(+). Lys-404 contributes to the UDP-N-acetyl-alpha-D-mannosaminouronate binding site.

The protein belongs to the UDP-glucose/GDP-mannose dehydrogenase family. In terms of assembly, homotetramer; probably dimer of dimers.

It carries out the reaction UDP-N-acetyl-alpha-D-mannosamine + 2 NAD(+) + H2O = UDP-N-acetyl-alpha-D-mannosaminouronate + 2 NADH + 3 H(+). Its function is as follows. Catalyzes the four-electron oxidation of UDP-N-acetyl-D-mannosamine (UDP-ManNAc), reducing NAD(+) and releasing UDP-N-acetylmannosaminuronic acid (UDP-ManNAcA). Cannot use NADP instead of NAD. The protein is UDP-N-acetyl-D-mannosamine dehydrogenase (wecC) of Methanococcus maripaludis (strain DSM 14266 / JCM 13030 / NBRC 101832 / S2 / LL).